The following is a 188-amino-acid chain: dCTP deaminase (188 aa).

Residues 111–116, 135–137, Gln156, Tyr170, and Gln180 each bind dCTP; these read KSTYAR and TLE. The active-site Proton donor/acceptor is the Glu137.

This sequence belongs to the dCTP deaminase family. As to quaternary structure, homotrimer.

It carries out the reaction dCTP + H2O + H(+) = dUTP + NH4(+). It functions in the pathway pyrimidine metabolism; dUMP biosynthesis; dUMP from dCTP (dUTP route): step 1/2. In terms of biological role, catalyzes the deamination of dCTP to dUTP. This Dechloromonas aromatica (strain RCB) protein is dCTP deaminase.